The sequence spans 493 residues: Glutamyl-tRNA(Gln) amidotransferase subunit A (493 aa).

Active-site charge relay system residues include K79 and S159. The Acyl-ester intermediate role is filled by S183.

Belongs to the amidase family. GatA subfamily. In terms of assembly, heterotrimer of A, B and C subunits.

The catalysed reaction is L-glutamyl-tRNA(Gln) + L-glutamine + ATP + H2O = L-glutaminyl-tRNA(Gln) + L-glutamate + ADP + phosphate + H(+). In terms of biological role, allows the formation of correctly charged Gln-tRNA(Gln) through the transamidation of misacylated Glu-tRNA(Gln) in organisms which lack glutaminyl-tRNA synthetase. The reaction takes place in the presence of glutamine and ATP through an activated gamma-phospho-Glu-tRNA(Gln). The protein is Glutamyl-tRNA(Gln) amidotransferase subunit A of Rhizobium johnstonii (strain DSM 114642 / LMG 32736 / 3841) (Rhizobium leguminosarum bv. viciae).